Consider the following 190-residue polypeptide: CASP-like protein 1U3 (190 aa).

Over 1–24 the chain is Cytoplasmic; it reads MNGATVQPSYKEAGPVRYHPMHDC. The helical transmembrane segment at 25–45 threads the bilayer; it reads LSLILRLLTLGATIAAIVAML. Over 46 to 70 the chain is Extracellular; it reads KSTQTVPTLLGPHTARWKDFPAFEW. Residues 71-91 traverse the membrane as a helical segment; it reads FVIGNSIVLVYAALGTLAACL. Residues 92-113 lie on the Cytoplasmic side of the membrane; that stretch reads SLFTRRGPLSYTKTAWLTFLCD. The helical transmembrane segment at 114–134 threads the bilayer; sequence FICSCALISAGSTALGVAWIG. Residues 135-158 lie on the Extracellular side of the membrane; that stretch reads KHGQHSAFWNAVCPTVDRFCDYVQ. Residues 159 to 179 traverse the membrane as a helical segment; that stretch reads GALIATLCGFIFQALSTVIAA. The Cytoplasmic segment spans residues 180 to 190; the sequence is SALHNLATHRH.

Belongs to the Casparian strip membrane proteins (CASP) family. As to quaternary structure, homodimer and heterodimers.

It localises to the cell membrane. In Physcomitrium patens (Spreading-leaved earth moss), this protein is CASP-like protein 1U3.